Here is a 1394-residue protein sequence, read N- to C-terminus: DNA-directed RNA polymerase subunit beta' (1394 aa).

Zn(2+) contacts are provided by Cys-71, Cys-73, Cys-86, and Cys-89. Mg(2+)-binding residues include Asp-462, Asp-464, and Asp-466. The Zn(2+) site is built by Cys-810, Cys-884, Cys-891, and Cys-894.

The protein belongs to the RNA polymerase beta' chain family. In terms of assembly, the RNAP catalytic core consists of 2 alpha, 1 beta, 1 beta' and 1 omega subunit. When a sigma factor is associated with the core the holoenzyme is formed, which can initiate transcription. Mg(2+) serves as cofactor. Requires Zn(2+) as cofactor.

The enzyme catalyses RNA(n) + a ribonucleoside 5'-triphosphate = RNA(n+1) + diphosphate. DNA-dependent RNA polymerase catalyzes the transcription of DNA into RNA using the four ribonucleoside triphosphates as substrates. In Caulobacter sp. (strain K31), this protein is DNA-directed RNA polymerase subunit beta'.